The chain runs to 248 residues: tRNA (guanine-N(1)-)-methyltransferase (248 aa).

S-adenosyl-L-methionine is bound by residues Gly-113 and Ile-133 to Leu-138.

Belongs to the RNA methyltransferase TrmD family. Homodimer.

Its subcellular location is the cytoplasm. The catalysed reaction is guanosine(37) in tRNA + S-adenosyl-L-methionine = N(1)-methylguanosine(37) in tRNA + S-adenosyl-L-homocysteine + H(+). Specifically methylates guanosine-37 in various tRNAs. This chain is tRNA (guanine-N(1)-)-methyltransferase, found in Shewanella halifaxensis (strain HAW-EB4).